Consider the following 341-residue polypeptide: Malate dehydrogenase, mitochondrial (341 aa).

NAD(+)-binding positions include 35 to 41 (GAGGGIG) and D61. Residues R109 and R115 each coordinate substrate. NAD(+) is bound at residue N122. Positions 147 and 181 each coordinate substrate. H205 (proton acceptor) is an active-site residue. M254 is a binding site for NAD(+).

Belongs to the LDH/MDH superfamily. MDH type 1 family. As to quaternary structure, homodimer.

The protein resides in the mitochondrion matrix. The enzyme catalyses (S)-malate + NAD(+) = oxaloacetate + NADH + H(+). In Schizosaccharomyces pombe (strain 972 / ATCC 24843) (Fission yeast), this protein is Malate dehydrogenase, mitochondrial (MDH1).